Reading from the N-terminus, the 758-residue chain is 5-methyltetrahydropteroyltriglutamate--homocysteine methyltransferase (758 aa).

5-methyltetrahydropteroyltri-L-glutamate is bound by residues 16-19 (RELK) and K117. Residues 436–438 (IGS) and E489 each bind L-homocysteine. Residues 436-438 (IGS) and E489 contribute to the L-methionine site. 5-methyltetrahydropteroyltri-L-glutamate is bound by residues 520 to 521 (RC) and W566. D604 serves as a coordination point for L-homocysteine. Residue D604 coordinates L-methionine. 5-methyltetrahydropteroyltri-L-glutamate is bound at residue E610. The Zn(2+) site is built by H646, C648, and E670. H699 acts as the Proton donor in catalysis. C731 lines the Zn(2+) pocket.

Belongs to the vitamin-B12 independent methionine synthase family. Zn(2+) is required as a cofactor.

It catalyses the reaction 5-methyltetrahydropteroyltri-L-glutamate + L-homocysteine = tetrahydropteroyltri-L-glutamate + L-methionine. Its pathway is amino-acid biosynthesis; L-methionine biosynthesis via de novo pathway; L-methionine from L-homocysteine (MetE route): step 1/1. Catalyzes the transfer of a methyl group from 5-methyltetrahydrofolate to homocysteine resulting in methionine formation. This chain is 5-methyltetrahydropteroyltriglutamate--homocysteine methyltransferase, found in Ruthia magnifica subsp. Calyptogena magnifica.